We begin with the raw amino-acid sequence, 379 residues long: Probable 3-phenylpropionic acid transporter (379 aa).

Residues M1–Q4 lie on the Cytoplasmic side of the membrane. The helical transmembrane segment at S5–L31 threads the bilayer. Topologically, residues K32–T37 are periplasmic. Residues P38–P66 traverse the membrane as a helical segment. The Cytoplasmic segment spans residues S67 to I70. A helical membrane pass occupies residues S71–L96. Topologically, residues M97 to M100 are periplasmic. A helical transmembrane segment spans residues I101–A118. Topologically, residues N119–Y129 are cytoplasmic. Residues G130 to T152 traverse the membrane as a helical segment. The Periplasmic portion of the chain corresponds to M153–D155. The chain crosses the membrane as a helical span at residues Y156–L175. Residues I176 to F207 are Cytoplasmic-facing. The helical transmembrane segment at L208–I227 threads the bilayer. The Periplasmic portion of the chain corresponds to Y228–A231. Residues A232–L256 form a helical membrane-spanning segment. The Cytoplasmic segment spans residues S257–A266. A helical membrane pass occupies residues R267 to A286. The Periplasmic portion of the chain corresponds to T287–A289. A helical transmembrane segment spans residues L290–M312. Residues R313–V323 are Cytoplasmic-facing. A helical transmembrane segment spans residues I324–Q351. Residues Y352–G354 lie on the Periplasmic side of the membrane. Residues H355–V375 form a helical membrane-spanning segment. The Cytoplasmic portion of the chain corresponds to V376–C379.

This sequence belongs to the major facilitator superfamily. Phenyl propionate permease (PPP) (TC 2.A.1.27) family.

Its subcellular location is the cell inner membrane. In terms of biological role, probable permease involved in the uptake of 3-phenylpropionic acid. The protein is Probable 3-phenylpropionic acid transporter (hcaT) of Escherichia coli (strain K12).